The following is a 213-amino-acid chain: Orotate phosphoribosyltransferase (213 aa).

Lys-25 provides a ligand contact to 5-phospho-alpha-D-ribose 1-diphosphate. 33-34 (FF) is a binding site for orotate. 5-phospho-alpha-D-ribose 1-diphosphate contacts are provided by residues 71 to 72 (YK), Arg-98, Lys-99, Lys-102, His-104, and 124 to 132 (DDVITSGTA). Orotate-binding residues include Thr-128 and Arg-156.

It belongs to the purine/pyrimidine phosphoribosyltransferase family. PyrE subfamily. As to quaternary structure, homodimer. It depends on Mg(2+) as a cofactor.

It carries out the reaction orotidine 5'-phosphate + diphosphate = orotate + 5-phospho-alpha-D-ribose 1-diphosphate. It functions in the pathway pyrimidine metabolism; UMP biosynthesis via de novo pathway; UMP from orotate: step 1/2. Catalyzes the transfer of a ribosyl phosphate group from 5-phosphoribose 1-diphosphate to orotate, leading to the formation of orotidine monophosphate (OMP). This is Orotate phosphoribosyltransferase from Buchnera aphidicola subsp. Acyrthosiphon pisum (strain 5A).